A 394-amino-acid polypeptide reads, in one-letter code: 1-deoxy-D-xylulose 5-phosphate reductoisomerase (394 aa).

NADPH contacts are provided by Thr-12, Gly-13, Ser-14, Ile-15, Gly-38, Asn-41, and Asn-132. Lys-133 is a binding site for 1-deoxy-D-xylulose 5-phosphate. Residue Glu-134 participates in NADPH binding. Position 156 (Asp-156) interacts with Mn(2+). 4 residues coordinate 1-deoxy-D-xylulose 5-phosphate: Ser-157, Glu-158, Ser-182, and His-205. Position 158 (Glu-158) interacts with Mn(2+). Gly-211 provides a ligand contact to NADPH. The 1-deoxy-D-xylulose 5-phosphate site is built by Ser-218, Asn-223, Lys-224, and Glu-227. A Mn(2+)-binding site is contributed by Glu-227.

This sequence belongs to the DXR family. Mg(2+) serves as cofactor. The cofactor is Mn(2+).

The catalysed reaction is 2-C-methyl-D-erythritol 4-phosphate + NADP(+) = 1-deoxy-D-xylulose 5-phosphate + NADPH + H(+). It functions in the pathway isoprenoid biosynthesis; isopentenyl diphosphate biosynthesis via DXP pathway; isopentenyl diphosphate from 1-deoxy-D-xylulose 5-phosphate: step 1/6. Its function is as follows. Catalyzes the NADPH-dependent rearrangement and reduction of 1-deoxy-D-xylulose-5-phosphate (DXP) to 2-C-methyl-D-erythritol 4-phosphate (MEP). This is 1-deoxy-D-xylulose 5-phosphate reductoisomerase from Paenarthrobacter aurescens (strain TC1).